Consider the following 407-residue polypeptide: Zinc finger protein 260 (407 aa).

The disordered stretch occupies residues 1–21 (MLESLQPESELLHDEPDPGEK). The segment covering 10–21 (ELLHDEPDPGEK) has biased composition (basic and acidic residues). The C2H2-type 1 zinc finger occupies 23–45 (YECDECRKTFSLEQHFVEHKKTH). A C2H2-type 2; degenerate zinc finger spans residues 51-73 (PECTGCGEEFSKASSLTRHLRSR). C2H2-type zinc fingers lie at residues 79–101 (YKCG…QKQH), 131–153 (YACK…EKIH), 159–181 (FECN…QNVH), 187–209 (FKCN…QRIH), 215–237 (YECK…QRSH), 243–265 (YTCK…EKIH), 271–293 (YKCN…HNIH), 299–321 (YECN…VRIH), 327–349 (YECK…MRSH), 355–377 (YGCN…MRIH), and 383–405 (YQCS…QRIH).

This sequence belongs to the krueppel C2H2-type zinc-finger protein family. As to quaternary structure, binds DNA. Interacts with GATA4. As to expression, expressed in both embryonic, fetal and adult heart. Also expressed in lung, skeletal muscle and adrenal glands.

Its subcellular location is the nucleus. Transcription factor that acts as a cardiac regulator and an effector of alpha1-adrenergic signaling. Binds to PE response elements (PERE) present in the promoter of genes such as ANF/NPPA and acts as a direct transcriptional activator of NPPA. Also acts as a cofactor with GATA4, a key cardiac regulator. The polypeptide is Zinc finger protein 260 (Znf260) (Rattus norvegicus (Rat)).